The sequence spans 75 residues: Small ribosomal subunit protein bS18 (75 aa).

It belongs to the bacterial ribosomal protein bS18 family. In terms of assembly, part of the 30S ribosomal subunit. Forms a tight heterodimer with protein bS6.

In terms of biological role, binds as a heterodimer with protein bS6 to the central domain of the 16S rRNA, where it helps stabilize the platform of the 30S subunit. The polypeptide is Small ribosomal subunit protein bS18 (Saccharophagus degradans (strain 2-40 / ATCC 43961 / DSM 17024)).